A 242-amino-acid chain; its full sequence is NAD-dependent protein deacylase 1 (242 aa).

Residues 1 to 242 (MDFKILKEKL…FAMKFEEKEG (242 aa)) enclose the Deacetylase sirtuin-type domain. 21 to 40 (GAGISKESGIPTFRGEDGLW) contributes to the NAD(+) binding site. Positions 65 and 68 each coordinate substrate. Residue 99 to 102 (QNVD) participates in NAD(+) binding. His-117 functions as the Proton acceptor in the catalytic mechanism. Residues Cys-125, Cys-128, Cys-146, and Cys-149 each coordinate Zn(2+). Residues 186 to 188 (GTS) and Glu-241 each bind NAD(+).

The protein belongs to the sirtuin family. Class III subfamily. Zn(2+) serves as cofactor.

The protein resides in the cytoplasm. The enzyme catalyses N(6)-acetyl-L-lysyl-[protein] + NAD(+) + H2O = 2''-O-acetyl-ADP-D-ribose + nicotinamide + L-lysyl-[protein]. The catalysed reaction is N(6)-succinyl-L-lysyl-[protein] + NAD(+) + H2O = 2''-O-succinyl-ADP-D-ribose + nicotinamide + L-lysyl-[protein]. Functionally, NAD-dependent lysine deacetylase and desuccinylase that specifically removes acetyl and succinyl groups on target proteins. Modulates the activities of several proteins which are inactive in their acylated form. The protein is NAD-dependent protein deacylase 1 of Caldanaerobacter subterraneus subsp. tengcongensis (strain DSM 15242 / JCM 11007 / NBRC 100824 / MB4) (Thermoanaerobacter tengcongensis).